A 92-amino-acid polypeptide reads, in one-letter code: Small ribosomal subunit protein uS19 (92 aa).

This sequence belongs to the universal ribosomal protein uS19 family.

In terms of biological role, protein S19 forms a complex with S13 that binds strongly to the 16S ribosomal RNA. The sequence is that of Small ribosomal subunit protein uS19 from Beijerinckia indica subsp. indica (strain ATCC 9039 / DSM 1715 / NCIMB 8712).